Reading from the N-terminus, the 226-residue chain is Glutathione peroxidase 3 (226 aa).

The first 24 residues, methionine 1–glycine 24, serve as a signal peptide directing secretion. Selenocysteine 73 is a catalytic residue. A non-standard amino acid (selenocysteine) is located at residue selenocysteine 73.

This sequence belongs to the glutathione peroxidase family. As to quaternary structure, homotetramer. In terms of tissue distribution, secreted in plasma.

It is found in the secreted. It carries out the reaction 2 glutathione + H2O2 = glutathione disulfide + 2 H2O. The enzyme catalyses tert-butyl hydroperoxide + 2 glutathione = tert-butanol + glutathione disulfide + H2O. Its function is as follows. Protects cells and enzymes from oxidative damage, by catalyzing the reduction of hydrogen peroxide, lipid peroxides and organic hydroperoxide, by glutathione. The chain is Glutathione peroxidase 3 from Mus musculus (Mouse).